The primary structure comprises 328 residues: DNA-directed RNA polymerase subunit alpha (328 aa).

The segment at 1-233 (MHNSATEFLK…EQLEAFIDLR (233 aa)) is alpha N-terminal domain (alpha-NTD). An alpha C-terminal domain (alpha-CTD) region spans residues 247–328 (FDPVLLRPVD…WPPVSILKND (82 aa)).

It belongs to the RNA polymerase alpha chain family. Homodimer. The RNAP catalytic core consists of 2 alpha, 1 beta, 1 beta' and 1 omega subunit. When a sigma factor is associated with the core the holoenzyme is formed, which can initiate transcription.

It catalyses the reaction RNA(n) + a ribonucleoside 5'-triphosphate = RNA(n+1) + diphosphate. DNA-dependent RNA polymerase catalyzes the transcription of DNA into RNA using the four ribonucleoside triphosphates as substrates. The protein is DNA-directed RNA polymerase subunit alpha of Wigglesworthia glossinidia brevipalpis.